A 212-amino-acid polypeptide reads, in one-letter code: MRIFILGRTKYQEAWALMKRIHDEVASGVSEEMILVTEHDHVITVGRHGRLNNVLRRELPIYVVERGGDATYHGPGQAVVYPVVRLRGGVRSYLWALEEAVIRTLDKYGISAGRREDHRGVWVGGKKIASVGIAVERGVAYHGVAVYVNPHMEYFYHINPCGLPPSVITSMRQLGVEADVFEVGYAVAANLETLLQRQERLKTRCESLRRIP.

One can recognise a BPL/LPL catalytic domain in the interval 28–199 (GVSEEMILVT…NLETLLQRQE (172 aa)). Residues 66–73 (RGGDATYH), 130–132 (SVG), and 143–145 (GVA) each bind substrate. The Acyl-thioester intermediate role is filled by C161.

This sequence belongs to the LipB family.

The protein localises to the cytoplasm. The catalysed reaction is octanoyl-[ACP] + L-lysyl-[protein] = N(6)-octanoyl-L-lysyl-[protein] + holo-[ACP] + H(+). The protein operates within protein modification; protein lipoylation via endogenous pathway; protein N(6)-(lipoyl)lysine from octanoyl-[acyl-carrier-protein]: step 1/2. Functionally, catalyzes the transfer of endogenously produced octanoic acid from octanoyl-acyl-carrier-protein onto the lipoyl domains of lipoate-dependent enzymes. Lipoyl-ACP can also act as a substrate although octanoyl-ACP is likely to be the physiological substrate. The protein is Probable octanoyltransferase of Pyrobaculum arsenaticum (strain DSM 13514 / JCM 11321 / PZ6).